Consider the following 382-residue polypeptide: Protein RecA (382 aa).

Glycine 79–threonine 86 is an ATP binding site.

It belongs to the RecA family.

It is found in the cytoplasm. Functionally, can catalyze the hydrolysis of ATP in the presence of single-stranded DNA, the ATP-dependent uptake of single-stranded DNA by duplex DNA, and the ATP-dependent hybridization of homologous single-stranded DNAs. It interacts with LexA causing its activation and leading to its autocatalytic cleavage. The chain is Protein RecA from Streptococcus sanguinis (strain SK36).